The following is a 568-amino-acid chain: Natural resistance-associated macrophage protein 2 (568 aa).

Residues 1–20 are compositionally biased toward basic and acidic residues; that stretch reads MVLDPKEKMPDDGASGDHGD. Residues 1–45 form a disordered region; it reads MVLDPKEKMPDDGASGDHGDSASLGAINPAYSNSSLPHSTGDSEE. Over 1–69 the chain is Cytoplasmic; that stretch reads MVLDPKEKMP…EEYSCFSFRK (69 aa). The span at 30–40 shows a compositional bias: polar residues; it reads AYSNSSLPHST. Residues 70–90 traverse the membrane as a helical segment; it reads LWAFTGPGFLMSIAYLDPGNI. At 91 to 95 the chain is on the extracellular side; sequence ESDLQ. The helical transmembrane segment at 96–117 threads the bilayer; sequence SGAVAGFKLLWVLLLATIVGLL. Residues 118 to 154 are Cytoplasmic-facing; it reads LQRLAARLGVVTGLHLAEVCHRQYPKVPRIILWLMVE. The chain crosses the membrane as a helical span at residues 155 to 175; it reads LAIIGSDMQEVIGSAIAINLL. The Extracellular portion of the chain corresponds to 176–179; sequence SAGR. The chain crosses the membrane as a helical span at residues 180-194; sequence VPLWGGVLITIADTF. Topologically, residues 195–208 are cytoplasmic; sequence VFLFLDKYGLRKLE. Residues 209–229 traverse the membrane as a helical segment; sequence AFFGFLITIMALTFGYEYITV. The Extracellular portion of the chain corresponds to 230–255; that stretch reads KPSQSQVLRGMFVPSCPGCRTPQVEQ. A helical membrane pass occupies residues 256-276; it reads AVGIVGAVIMPHNMYLHSALV. The Cytoplasmic portion of the chain corresponds to 277–301; that stretch reads KSRQVNRANKQEVREANKYFFIESC. A helical membrane pass occupies residues 302 to 322; that stretch reads IALFVSFIINVFVVSVFAEAF. The Extracellular segment spans residues 323–360; the sequence is FEKTNKQVVEVCKNNSSPHADLFPSDNSTLAVDIYKGG. Residues N336 and N349 are each glycosylated (N-linked (GlcNAc...) asparagine). A helical membrane pass occupies residues 361 to 381; that stretch reads VVLGCYFGPAALYIWAVGILA. Topologically, residues 382–408 are cytoplasmic; the sequence is AGQSSTMTGTYSGQFVMEGFLNLKWSR. A helical membrane pass occupies residues 409 to 429; the sequence is FARVILTRSIAIIPTLLVAVF. Residues 430–440 are Extracellular-facing; that stretch reads QDVEHLTGMND. A helical transmembrane segment spans residues 441-461; the sequence is FLNVLQSLQLPFALIPILTFT. The Cytoplasmic portion of the chain corresponds to 462–482; that stretch reads SLRPVMSEFSNGIGWRIAGGI. The chain crosses the membrane as a helical span at residues 483–503; that stretch reads LVLIVCSINMYFVVVYVQELG. Residues 504 to 506 are Extracellular-facing; sequence HVA. The helical transmembrane segment at 507–527 threads the bilayer; that stretch reads LYVVAAVVSVAYLTFVFYLGW. Over 528 to 568 the chain is Cytoplasmic; sequence QCLIALGLSFLDCGRSYRLGLTAQPELYLLNTVDADSVVSR. Residues 555 to 559 form a required for early endosome targeting region; the sequence is YLLNT. 3 positions are modified to phosphoserine: L556, S564, and S567.

It belongs to the NRAMP family. As to quaternary structure, forms a complex with NDFIP1 and NEDD4L, in cortical neurons, in response to iron and cobalt exposure; this interaction leads to SLC11A2 ubiquitination by NEDD4L and proteasome-dependent degradation. Interacts with NDFIP1, NDFIP2 and WWP2; this interaction leads to SLC11A2 ubiquitination by WWP2 and subsequent proteasome-dependent degradation. Interacts with COX2 and TOM6 at the outer mitochondrion membrane. Interacts with ARRDC1; this interaction regulates the incorporation of SLC11A2 into extracellular vesicles through an ubiquitination-dependent mechanism. Interacts with ARRDC4; controls the incorporation of SLC11A2 into extracellular vesicles through an ubiquitination-dependent mechanism. Ubiquitinated by WWP2. In terms of processing, N-glycosylated. In terms of tissue distribution, abundantly expressed in erythroid precursor cells (at protein level). Expressed in duodenum (at protein level).

It localises to the golgi apparatus. The protein localises to the trans-Golgi network membrane. It is found in the early endosome membrane. Its subcellular location is the recycling endosome membrane. The protein resides in the cell membrane. It localises to the late endosome membrane. The protein localises to the lysosome membrane. It is found in the apical cell membrane. Its subcellular location is the mitochondrion outer membrane. The protein resides in the extracellular vesicle membrane. The catalysed reaction is Fe(2+)(in) + H(+)(in) = Fe(2+)(out) + H(+)(out). It catalyses the reaction Co(2+)(out) + H(+)(out) = Co(2+)(in) + H(+)(in). The enzyme catalyses Cd(2+)(out) + H(+)(out) = Cd(2+)(in) + H(+)(in). It carries out the reaction Mn(2+)(in) + H(+)(in) = Mn(2+)(out) + H(+)(out). The catalysed reaction is Zn(2+)(out) + H(+)(out) = Zn(2+)(in) + H(+)(in). It catalyses the reaction Ni(2+)(out) + H(+)(out) = Ni(2+)(in) + H(+)(in). The enzyme catalyses H(+)(in) = H(+)(out). It carries out the reaction Fe(2+)(in) = Fe(2+)(out). Its function is as follows. Proton-coupled metal ion symporter operating with a proton to metal ion stoichiometry of 1:1. Selectively transports various divalent metal cations, in decreasing affinity: Cd(2+) &gt; Fe(2+) &gt; Co(2+), Mn(2+) &gt;&gt; Zn(2+), Ni(2+), VO(2+). Essential for maintenance of iron homeostasis by modulating intestinal absorption of dietary Fe(2+) and TF-associated endosomal Fe(2+) transport in erythroid precursors and other cells. Enables Fe(2+) and Mn(2+) ion entry into mitochondria, and is thus expected to promote mitochondrial heme synthesis, iron-sulfur cluster biogenesis and antioxidant defense. Can mediate uncoupled fluxes of either protons or metal ions. This chain is Natural resistance-associated macrophage protein 2 (Slc11a2), found in Mus musculus (Mouse).